A 33-amino-acid polypeptide reads, in one-letter code: Brevinin-2PTd (33 aa).

Cys-27 and Cys-33 are oxidised to a cystine.

In terms of tissue distribution, expressed by the skin glands.

The protein resides in the secreted. Has antibacterial activity against the Gram-positive bacterium S.aureus ATCC 25923 and the Gram-negative bacterium E.coli ATCC 25726. The chain is Brevinin-2PTd from Pulchrana picturata (Malaysian fire frog).